The following is a 500-amino-acid chain: Na(+)/H(+) antiporter NhaB (500 aa).

13 helical membrane-spanning segments follow: residues 11–31, 34–54, 58–78, 96–116, 121–141, 145–165, 205–225, 241–261, 311–331, 350–370, 394–414, 450–470, and 477–497; these read HGFLGQSPLWYKAVICLFLVL, LLLATIGPAAAGWALVIEFIF, MALKCYPLMPGGLLLIEALLL, VILLLMFMVAGIHFMKELLLF, ILLGVRSKAMLSLLFCVLSAF, FLDALTVTAVIISAAVGFYAV, LLMHGAVGTALGGVCTLVGEP, FLLKVAPVSIPVLGAGLLTCV, ILIICLGLHVAEVGLIGLMVI, FQDAMPFTSLLVVFFAVVAVI, MLYLANGLLSAISDNVFVATI, ATPNGQAAFLFLLTSAIAPLI, and MVWMALPYTVVMGGLGWWAVT.

The protein belongs to the NhaB Na(+)/H(+) (TC 2.A.34) antiporter family.

Its subcellular location is the cell inner membrane. It carries out the reaction 2 Na(+)(in) + 3 H(+)(out) = 2 Na(+)(out) + 3 H(+)(in). In terms of biological role, na(+)/H(+) antiporter that extrudes sodium in exchange for external protons. The polypeptide is Na(+)/H(+) antiporter NhaB (Pseudomonas putida (strain ATCC 700007 / DSM 6899 / JCM 31910 / BCRC 17059 / LMG 24140 / F1)).